Consider the following 360-residue polypeptide: tRNA-specific 2-thiouridylase MnmA (360 aa).

Residues 9 to 16 (AMSGGVDS) and L35 contribute to the ATP site. C104 functions as the Nucleophile in the catalytic mechanism. A disulfide bridge connects residues C104 and C197. Position 128 (G128) interacts with ATP. The interval 147-149 (KDQ) is interaction with tRNA. The active-site Cysteine persulfide intermediate is C197.

It belongs to the MnmA/TRMU family.

Its subcellular location is the cytoplasm. It catalyses the reaction S-sulfanyl-L-cysteinyl-[protein] + uridine(34) in tRNA + AH2 + ATP = 2-thiouridine(34) in tRNA + L-cysteinyl-[protein] + A + AMP + diphosphate + H(+). Functionally, catalyzes the 2-thiolation of uridine at the wobble position (U34) of tRNA, leading to the formation of s(2)U34. The protein is tRNA-specific 2-thiouridylase MnmA of Salinispora arenicola (strain CNS-205).